A 786-amino-acid chain; its full sequence is Probable aminopeptidase 1 (786 aa).

Substrate is bound by residues Glu103 and Gly235 to Asn239. His270 is a binding site for Zn(2+). Residue Glu271 is the Proton acceptor of the active site. Residues His274 and Glu293 each coordinate Zn(2+).

This sequence belongs to the peptidase M1 family. It depends on Zn(2+) as a cofactor.

The protein resides in the cytoplasm. The protein is Probable aminopeptidase 1 (ape1) of Sulfurisphaera tokodaii (strain DSM 16993 / JCM 10545 / NBRC 100140 / 7) (Sulfolobus tokodaii).